We begin with the raw amino-acid sequence, 307 residues long: Taste receptor type 2 member 10 (307 aa).

Over 1–6 (MLRVVE) the chain is Extracellular. The helical transmembrane segment at 7-27 (GIFIFVVISEXVFGVLGNGFI) threads the bilayer. At 28–42 (GLVNCIDCAKNKLST) the chain is on the cytoplasmic side. Residues 43–63 (IGFILTGLAISRIFLIWIIIT) form a helical membrane-spanning segment. The Extracellular portion of the chain corresponds to 64 to 100 (DGFIQIFSPDIYASGNLIEYISYFWVIGNQSSMWFAT). The N-linked (GlcNAc...) asparagine glycan is linked to Asn-92. Residues 101 to 121 (SLSIFYFLKIANFSNYIFLWL) form a helical membrane-spanning segment. Residues 122 to 126 (KSRTN) lie on the Cytoplasmic side of the membrane. Residues 127 to 147 (MVLPFMIVFLLISSLLNFAHI) form a helical membrane-spanning segment. Residues 148–179 (AKILNDYKMKNDTVWDLNMYKSEYFIKQILLN) lie on the Extracellular side of the membrane. Asn-158 carries an N-linked (GlcNAc...) asparagine glycan. A helical membrane pass occupies residues 180–200 (LGVIFFFTLSLITCVFLIISL). The Cytoplasmic portion of the chain corresponds to 201 to 227 (WRHNRQMQSNVTGLRDSNTEAHVKAMK). Residues 228-248 (VLISFXILFILYFIGMAIEIS) form a helical membrane-spanning segment. At 249–257 (CFTVRENKL) the chain is on the extracellular side. Residues 258–278 (LLMFGMTTTAIYPWGHSFILI) form a helical membrane-spanning segment. Residues 279–307 (LGNSKLKQASLRVLQQLKCCEKRKNLRVT) are Cytoplasmic-facing.

Belongs to the G-protein coupled receptor T2R family.

The protein resides in the membrane. In terms of biological role, receptor that may play a role in the perception of bitterness and is gustducin-linked. May play a role in sensing the chemical composition of the gastrointestinal content. The activity of this receptor may stimulate alpha gustducin, mediate PLC-beta-2 activation and lead to the gating of TRPM5. This Gorilla gorilla gorilla (Western lowland gorilla) protein is Taste receptor type 2 member 10 (TAS2R10).